Reading from the N-terminus, the 225-residue chain is UPF0758 protein BPP1850 (225 aa).

Positions 103–225 (ALANPDLVRR…TVSMAAQGHL (123 aa)) constitute an MPN domain. 3 residues coordinate Zn(2+): H174, H176, and D187. The JAMM motif motif lies at 174-187 (HNHPGGTAAASAAD).

This sequence belongs to the UPF0758 family.

This Bordetella parapertussis (strain 12822 / ATCC BAA-587 / NCTC 13253) protein is UPF0758 protein BPP1850.